Reading from the N-terminus, the 440-residue chain is Ribulose bisphosphate carboxylase large chain (440 aa).

An N6,N6,N6-trimethyllysine modification is found at Lys4. Substrate is bound by residues Asn113 and Thr163. Lys165 functions as the Proton acceptor in the catalytic mechanism. Lys167 contributes to the substrate binding site. Mg(2+) is bound by residues Lys191, Asp193, and Glu194. N6-carboxylysine is present on Lys191. The active-site Proton acceptor is His284. Substrate-binding residues include Arg285, His317, and Ser369.

The protein belongs to the RuBisCO large chain family. Type I subfamily. Heterohexadecamer of 8 large chains and 8 small chains; disulfide-linked. The disulfide link is formed within the large subunit homodimers. Mg(2+) serves as cofactor. In terms of processing, the disulfide bond which can form in the large chain dimeric partners within the hexadecamer appears to be associated with oxidative stress and protein turnover.

The protein resides in the plastid. It is found in the chloroplast. The enzyme catalyses 2 (2R)-3-phosphoglycerate + 2 H(+) = D-ribulose 1,5-bisphosphate + CO2 + H2O. The catalysed reaction is D-ribulose 1,5-bisphosphate + O2 = 2-phosphoglycolate + (2R)-3-phosphoglycerate + 2 H(+). RuBisCO catalyzes two reactions: the carboxylation of D-ribulose 1,5-bisphosphate, the primary event in carbon dioxide fixation, as well as the oxidative fragmentation of the pentose substrate in the photorespiration process. Both reactions occur simultaneously and in competition at the same active site. This chain is Ribulose bisphosphate carboxylase large chain, found in Matteuccia struthiopteris (European ostrich fern).